We begin with the raw amino-acid sequence, 590 residues long: MCLDIWRHKKKVLPLLLLMAIGSIIYYLYTLKLEGERDESATSTTSRLERDIRDLQAVFESEVIPDLGALGRPARGNWTEEQLEAIAKSQRETGYNAWLSKRISPERSLYDMRHRSCKKLKYPMEKLPSVSVVITYHNEEASVLLRTLSSLRSRTPIQLLREVILVDDGSTQADEKLNDFIKIKFLNMVQHRRITTQVGLMHARVVGAELALADVLVFLDSHVEVTKGWLEPLIAPILEDNRTCTTPIIDTIDFDNFAYRRGKPSRGFFNWEFNYIQLPLLKEEAVAMPAPHKNPIMNGGLFAIGREWFSELGGYDKGLKIWGAEQFELSLKLWLCGGQILEVPCSRVGHLFRDGNFQIRYTNKDKNSEKKLISRNYRRVAEIWLDEYKDKLFANMPHLTVIPVGNLAEQRDLKNRLHCKPFKWFLDNLATDFLNLYPILDPAEYASGVLQSISSPKLCLDRKDPSHGQPKLAPCSSDHVFPSPEQYWSLTNHRELRSGFYCLEVRNHGVNVHIYQCHGQSGNQFWSFDSKTHQVISGQQQNFRHCLEAQPELNAVTSSVCDPKNHKQQWKFGYLNSQRLQHFWDNVKTQ.

Residues 1–11 lie on the Cytoplasmic side of the membrane; sequence MCLDIWRHKKK. The helical; Signal-anchor for type II membrane protein transmembrane segment at 12–31 threads the bilayer; it reads VLPLLLLMAIGSIIYYLYTL. Residues 32 to 590 lie on the Lumenal side of the membrane; that stretch reads KLEGERDESA…QHFWDNVKTQ (559 aa). The N-linked (GlcNAc...) asparagine glycan is linked to Asn-77. Intrachain disulfides connect Cys-117-Cys-345, Cys-336-Cys-419, Cys-459-Cys-475, Cys-502-Cys-517, and Cys-546-Cys-561. A catalytic subdomain A region spans residues 127 to 236; sequence LPSVSVVITY…KGWLEPLIAP (110 aa). Residue Asp-168 participates in substrate binding. Residue Asp-220 coordinates Mn(2+). Ser-221 is a substrate binding site. Mn(2+) is bound at residue His-222. A glycan (N-linked (GlcNAc...) asparagine) is linked at Asn-241. The segment at 291–353 is catalytic subdomain B; sequence PHKNPIMNGG…PCSRVGHLFR (63 aa). Trp-322 serves as a coordination point for substrate. His-350 lines the Mn(2+) pocket. Arg-353 contacts substrate. The region spanning 446–573 is the Ricin B-type lectin domain; that stretch reads ASGVLQSISS…KNHKQQWKFG (128 aa).

It belongs to the glycosyltransferase 2 family. GalNAc-T subfamily. The cofactor is Mn(2+). In terms of tissue distribution, expressed in developing oocytes and egg chambers. During embryonic stages 9-11, expressed in the primordium of the foregut, midgut and hindgut. During embryonic stages 12-13, expressed in the posterior midgut and hindgut. During embryonic stages 14-15, expression continues in the hindgut. No expression detected during embryonic stages 16-17 or in third instar larvae imaginal disks.

Its subcellular location is the golgi apparatus membrane. It catalyses the reaction L-seryl-[protein] + UDP-N-acetyl-alpha-D-galactosamine = a 3-O-[N-acetyl-alpha-D-galactosaminyl]-L-seryl-[protein] + UDP + H(+). The enzyme catalyses L-threonyl-[protein] + UDP-N-acetyl-alpha-D-galactosamine = a 3-O-[N-acetyl-alpha-D-galactosaminyl]-L-threonyl-[protein] + UDP + H(+). It participates in protein modification; protein glycosylation. In terms of biological role, catalyzes the initial reaction in O-linked oligosaccharide biosynthesis, the transfer of an N-acetyl-D-galactosamine residue to a serine or threonine residue on the protein receptor. It can both act as a peptide transferase that transfers GalNAc onto unmodified peptide substrates, and as a glycopeptide transferase that requires the prior addition of a GalNAc on a peptide before adding additional GalNAc moieties. Prefers both EA2 and the diglycosylated Muc5AC-3/13 as substrates, albeit at very low levels fro Muc5AC-3/13. The protein is Polypeptide N-acetylgalactosaminyltransferase 8 of Drosophila melanogaster (Fruit fly).